Reading from the N-terminus, the 523-residue chain is GMP synthase [glutamine-hydrolyzing] (523 aa).

Positions 18 to 208 (KILIVDFGGQ…LYNVCGAKGD (191 aa)) constitute a Glutamine amidotransferase type-1 domain. The Nucleophile role is filled by Cys95. Residues His182 and Glu184 contribute to the active site. Residues 209–398 (WNMKSFLAEA…LGLPDYLVHR (190 aa)) enclose the GMPS ATP-PPase domain. 236–242 (SGGVDSS) contacts ATP.

As to quaternary structure, homodimer.

It catalyses the reaction XMP + L-glutamine + ATP + H2O = GMP + L-glutamate + AMP + diphosphate + 2 H(+). It participates in purine metabolism; GMP biosynthesis; GMP from XMP (L-Gln route): step 1/1. Functionally, catalyzes the synthesis of GMP from XMP. The protein is GMP synthase [glutamine-hydrolyzing] of Treponema denticola (strain ATCC 35405 / DSM 14222 / CIP 103919 / JCM 8153 / KCTC 15104).